Consider the following 309-residue polypeptide: Haloalkane dehalogenase (309 aa).

An AB hydrolase-1 domain is found at 37-148 (PTVLFLHGNP…FERWEDFHQR (112 aa)). Asp-110 functions as the Nucleophile in the catalytic mechanism. Residue Glu-134 is the Proton donor of the active site. His-278 (proton acceptor) is an active-site residue.

Belongs to the haloalkane dehalogenase family. Type 2 subfamily. As to quaternary structure, monomer.

It carries out the reaction 1-haloalkane + H2O = a halide anion + a primary alcohol + H(+). Its function is as follows. Catalyzes hydrolytic cleavage of carbon-halogen bonds in halogenated aliphatic compounds, leading to the formation of the corresponding primary alcohols, halide ions and protons. This Mesorhizobium japonicum (strain LMG 29417 / CECT 9101 / MAFF 303099) (Mesorhizobium loti (strain MAFF 303099)) protein is Haloalkane dehalogenase.